Consider the following 259-residue polypeptide: FAD-linked sulfhydryl oxidase (259 aa).

This sequence belongs to the baculoviridae p33 family. In terms of assembly, homodimer.

Its subcellular location is the host cytoplasm. It is found in the host nucleus. The enzyme catalyses 2 R'C(R)SH + O2 = R'C(R)S-S(R)CR' + H2O2. In terms of biological role, functional FAD-linked sulfhydryl oxidase that is required for infectious budded virion (BV) production and for the formation of enveloped occluded virion (ODV). The protein is FAD-linked sulfhydryl oxidase (P33) of Lepidoptera (butterflies and moths).